Reading from the N-terminus, the 233-residue chain is Protein lin-7 homolog A (233 aa).

Residues 25–80 enclose the L27 domain; sequence LDRDVARAIELLEKLQESGEVPVHKLQSLKKVLQSEFCTAIREVYQYMHETITVNG. A PDZ domain is found at 108-190; that stretch reads VVELPKTDEG…SVKLVVRYTP (83 aa).

It belongs to the lin-7 family. As to quaternary structure, forms a complex with CASK and CASKIN1. Component of the brain-specific heterotrimeric complex (LIN-10-LIN-2-LIN-7 complex) composed of at least APBA1, CASK, and LIN7, which associates with the motor protein KIF17 to transport vesicles along microtubules. Can also interact with other modular proteins containing protein-protein interaction domains like PALS1, PALS2, MPP7, DLG1, DLG2 and DLG3 through its L27 domain. Interacts with DLG4, GRIN2B and MARCHF11 as well as CDH1 and CTNNB1, the channels KCNJ12/Kir2.2, KCNJ4/Kir2.3 and probably KCNJ2/Kir2.1 and SLC6A12/BGT-1 via its PDZ domain. The association of LIN7A with cadherin and beta-catenin is calcium-dependent, occurs at synaptic junctions and requires the actin cytoskeleton. Interacts with EGFR, ERBB2, ERBB3 and ERBB4 with both PDZ and KID domains. Associates with KIF17 via APBA1. Interacts with HTR4. Forms a tripartite complex composed of DLG1, MPP7 and LIN7 (LIN7A or LIN7C).

The protein resides in the cell membrane. It localises to the basolateral cell membrane. It is found in the cell junction. The protein localises to the postsynaptic density membrane. Its subcellular location is the tight junction. Its function is as follows. Plays a role in establishing and maintaining the asymmetric distribution of channels and receptors at the plasma membrane of polarized cells. Forms membrane-associated multiprotein complexes that may regulate delivery and recycling of proteins to the correct membrane domains. The tripartite complex composed of LIN7 (LIN7A, LIN7B or LIN7C), CASK and APBA1 associates with the motor protein KIF17 to transport vesicles containing N-methyl-D-aspartate (NMDA) receptor subunit NR2B along microtubules. This complex may have the potential to couple synaptic vesicle exocytosis to cell adhesion in brain. Ensures the proper localization of GRIN2B (subunit 2B of the NMDA receptor) to neuronal postsynaptic density and may function in localizing synaptic vesicles at synapses where it is recruited by beta-catenin and cadherin. Required to localize Kir2 channels, GABA transporter (SLC6A12) and EGFR/ERBB1, ERBB2, ERBB3 and ERBB4 to the basolateral membrane of epithelial cells. The sequence is that of Protein lin-7 homolog A (LIN7A) from Bos taurus (Bovine).